The sequence spans 779 residues: Pleckstrin homology domain-containing family A member 4 (779 aa).

In terms of domain architecture, PH spans 54–153 (PVHIRGWLHK…WLRALGRASR (100 aa)). 3 disordered regions span residues 152–352 (SRAE…LPGP), 492–670 (AGLG…EGHR), and 691–764 (MTGG…LPQD). At Ser164 the chain carries Phosphoserine. The segment covering 184–193 (SRGEEGRISE) has biased composition (basic and acidic residues). Over residues 315-332 (QHWSQEPRTQAHSGSPTY) the composition is skewed to polar residues. Over residues 525–535 (PESLELSSPRS) the composition is skewed to low complexity. The span at 536–551 (PETDWGRPPGGDKDLA) shows a compositional bias: basic and acidic residues. Residue Ser559 is modified to Phosphoserine. Basic and acidic residues predominate over residues 594-603 (QLERMRRNQE). Positions 647-663 (LRSSGSWSSPRNTTPYL) are enriched in polar residues. Pro residues predominate over residues 704-724 (PGVPLPPSDPTRQETPPPRSP).

In terms of tissue distribution, highly expressed in melanoma. Detected at low levels in heart, skeletal muscle, kidney, liver and small intestine.

The protein resides in the cytoplasm. It localises to the membrane. In terms of biological role, binds specifically to phosphatidylinositol 3-phosphate (PtdIns3P), but not to other phosphoinositides. This chain is Pleckstrin homology domain-containing family A member 4 (PLEKHA4), found in Homo sapiens (Human).